A 201-amino-acid polypeptide reads, in one-letter code: UPF0301 protein MAP_0045 (201 aa).

It belongs to the UPF0301 (AlgH) family.

The chain is UPF0301 protein MAP_0045 from Mycolicibacterium paratuberculosis (strain ATCC BAA-968 / K-10) (Mycobacterium paratuberculosis).